Reading from the N-terminus, the 724-residue chain is Small conductance calcium-activated potassium channel protein 3 (724 aa).

Over residues Met1–Gly11 the composition is skewed to basic and acidic residues. Disordered regions lie at residues Met1–Asn161 and Ala232–Ala251. Over residues Gln34–Pro58 the composition is skewed to pro residues. A compositionally biased stretch (low complexity) spans Gln59–Pro88. Polar residues predominate over residues Pro105 to Leu125. Residues Gly131–Ser140 show a composition bias toward low complexity. At Ser160 the chain carries Phosphoserine. Polar residues predominate over residues Ala232–Pro249. The chain crosses the membrane as a helical span at residues Leu281 to Leu301. A helical membrane pass occupies residues Phe308–Ile328. The chain crosses the membrane as a helical span at residues Ile359–Trp379. Residues Ile398–His418 form a helical membrane-spanning segment. A helical membrane pass occupies residues Leu447–Ala467. Positions Phe487–Val507 form an intramembrane region, pore-forming. Residues Val516–Ala536 traverse the membrane as a helical segment. The interval Asp554 to Val630 is calmodulin-binding. Residues Ile635–Ser662 are a coiled coil. Positions Leu702–Cys724 are disordered. A compositionally biased stretch (low complexity) spans Ser710 to Cys724.

This sequence belongs to the potassium channel KCNN family. KCa2.3/KCNN3 subfamily. Homodimer. Heteromultimer with KCNN2 or KCNN1; this modulates plasma membrane expression and consequently the small conductance calcium-activated potassium channel activity. The complex is composed of 4 channel subunits each of which binds to a calmodulin subunit which regulates the channel activity through calcium-binding. Interacts with CALM1.

It is found in the cell membrane. The protein resides in the cytoplasm. The protein localises to the myofibril. It localises to the sarcomere. Its subcellular location is the z line. It catalyses the reaction K(+)(in) = K(+)(out). Its activity is regulated as follows. Inhibited by bee venom neurotoxin apamin. Its function is as follows. Small conductance calcium-activated potassium channel that mediates the voltage-independent transmembrane transfer of potassium across the cell membrane through a constitutive interaction with calmodulin which binds the intracellular calcium allowing its opening. The current is characterized by a voltage-independent activation, an intracellular calcium concentration increase-dependent activation and a single-channel conductance of 10 picosiemens. Also presents an inwardly rectifying current, thus reducing its already small outward conductance of potassium ions, which is particularly the case when the membrane potential displays positive values, above + 20 mV. Activation is followed by membrane hyperpolarization. Thought to regulate neuronal excitability by contributing to the slow component of synaptic afterhyperpolarization. In Sus scrofa (Pig), this protein is Small conductance calcium-activated potassium channel protein 3.